A 424-amino-acid polypeptide reads, in one-letter code: UDP-N-acetylglucosamine 1-carboxyvinyltransferase (424 aa).

22 to 23 (KN) serves as a coordination point for phosphoenolpyruvate. A UDP-N-acetyl-alpha-D-glucosamine-binding site is contributed by R96. C120 acts as the Proton donor in catalysis. C120 carries the post-translational modification 2-(S-cysteinyl)pyruvic acid O-phosphothioketal. UDP-N-acetyl-alpha-D-glucosamine contacts are provided by residues 125-129 (RPVDQ), D312, and I334.

It belongs to the EPSP synthase family. MurA subfamily.

The protein localises to the cytoplasm. It carries out the reaction phosphoenolpyruvate + UDP-N-acetyl-alpha-D-glucosamine = UDP-N-acetyl-3-O-(1-carboxyvinyl)-alpha-D-glucosamine + phosphate. It participates in cell wall biogenesis; peptidoglycan biosynthesis. Functionally, cell wall formation. Adds enolpyruvyl to UDP-N-acetylglucosamine. This chain is UDP-N-acetylglucosamine 1-carboxyvinyltransferase, found in Polynucleobacter asymbioticus (strain DSM 18221 / CIP 109841 / QLW-P1DMWA-1) (Polynucleobacter necessarius subsp. asymbioticus).